The sequence spans 364 residues: tRNA/tmRNA (uracil-C(5))-methyltransferase (364 aa).

S-adenosyl-L-methionine-binding residues include glutamine 188, tyrosine 216, asparagine 221, glutamate 237, and aspartate 297. Residue cysteine 322 is the Nucleophile of the active site. Glutamate 356 serves as the catalytic Proton acceptor.

The protein belongs to the class I-like SAM-binding methyltransferase superfamily. RNA M5U methyltransferase family. TrmA subfamily.

It catalyses the reaction uridine(54) in tRNA + S-adenosyl-L-methionine = 5-methyluridine(54) in tRNA + S-adenosyl-L-homocysteine + H(+). It carries out the reaction uridine(341) in tmRNA + S-adenosyl-L-methionine = 5-methyluridine(341) in tmRNA + S-adenosyl-L-homocysteine + H(+). In terms of biological role, dual-specificity methyltransferase that catalyzes the formation of 5-methyluridine at position 54 (m5U54) in all tRNAs, and that of position 341 (m5U341) in tmRNA (transfer-mRNA). This Teredinibacter turnerae (strain ATCC 39867 / T7901) protein is tRNA/tmRNA (uracil-C(5))-methyltransferase.